The sequence spans 401 residues: Probable thioesterase FGSG_00047 (401 aa).

Residues 379–401 (AREMDQRKRQKDFTHTTIHDKNS) are disordered.

This sequence belongs to the AMT4 thioesterase family.

It functions in the pathway mycotoxin biosynthesis. In terms of biological role, probable thioesterase; part of the gene cluster that mediates the biosynthesis of gramillins A and B, bicyclic lipopeptides that induce cell death in maize leaves but not in wheat leaves. The nonribosomal peptide synthetase GRA1 incorporates respectively a glutamic adic (Glu), a leucine (Leu), a serine (Ser), a hydroxyglutamine (HOGln), a 2-amino decanoic acid, and 2 cysteins (CysB and CysA). The biosynthesis of 2-amino decanoic acid incorporated in gramillins could be initiated by a fatty acid synthase composed of the alpha and beta subunits FGSG_00036 and FGSG_11656. The cytochrome P450 monooxygenase FGSG_15680 could hydroxylate the fatty acid chain. Subsequent oxidation to the ketone by the oxidoreductase FGSG_00048 and transamination by aminotransferase FGSG_00049 could form 2-amino-decanoic acid. On the other hand, FGSG_15680 could also be responsible for the HO-modified glutamine at the gamma-position. Whether hydroxylation occurs on the fully assembled product or on the Gln residue prior to assembly into the gramillins requires further proof. The thioredoxin FGSG_00043 could also be required for the disulfide-bond formation between CysA and CysB. The specific involvement of the remaining proteins from the cluster is more difficult to discern, but could have broader regulatory (FGSG_00040 and FGSG_11657) or enzymatic functions (FGSG_00044 and FGSG_00045). The final C-domain of GRA1 does not possess the expected sequence of a termination CT domain, often implicated in macrocyclization and release of a cyclopeptidein fungal NRPs; and the thioesterase FGSG_00047 may act in concert with the terminal C-domain of GRA1 to catalyze the formation of the macrocyclic anhydride and release of the products. This is Probable thioesterase FGSG_00047 from Gibberella zeae (strain ATCC MYA-4620 / CBS 123657 / FGSC 9075 / NRRL 31084 / PH-1) (Wheat head blight fungus).